The chain runs to 324 residues: Aldo-keto reductase family 1 member A1-A (324 aa).

NADP(+) is bound by residues 10-19, Thr20, Trp21, and Asp44; that span reads GQRMPTVGLG. The Proton donor role is filled by Tyr49. Positions 161, 162, 210, 212, 214, 262, 263, 264, 265, 268, 271, and 272 each coordinate NADP(+).

Belongs to the aldo/keto reductase family.

The protein localises to the cytoplasm. The protein resides in the cytosol. It localises to the apical cell membrane. The enzyme catalyses a primary alcohol + NADP(+) = an aldehyde + NADPH + H(+). It carries out the reaction S-nitroso-CoA + NADPH + H(+) = sulfinamide-CoA + NADP(+). It catalyses the reaction S-nitrosoglutathione + NADPH + H(+) = S-(hydroxysulfenamide)glutathione + NADP(+). In terms of biological role, catalyzes the NADPH-dependent reduction of a wide variety of carbonyl-containing compounds to their corresponding alcohols. Displays enzymatic activity towards endogenous metabolites such as aromatic and aliphatic aldehydes, ketones, monosaccharides and bile acids. Acts as an aldehyde-detoxification enzyme. Also acts as an inhibitor of protein S-nitrosylation by mediating degradation of S-nitroso-coenzyme A (S-nitroso-CoA), a cofactor required to S-nitrosylate proteins. Also acts as a S-nitroso-glutathione reductase by catalyzing the NADPH-dependent reduction of S-nitrosoglutathione. Displays no reductase activity towards retinoids. The polypeptide is Aldo-keto reductase family 1 member A1-A (akr1a1a) (Danio rerio (Zebrafish)).